The chain runs to 137 residues: Cucumber peeling cupredoxin (137 aa).

Glutamine 1 is subject to Pyrrolidone carboxylic acid. A Phytocyanin domain is found at 3-107 (TVHIVGDNTG…GQKLSINVVA (105 aa)). The Cu cation site is built by histidine 46, cysteine 89, histidine 94, and glutamine 99. Cysteine 60 and cysteine 95 are joined by a disulfide. Residue asparagine 109 is glycosylated (N-linked (GlcNAc...) asparagine). A disordered region spans residues 112–137 (VSMPPPSSSPPSSVMPPPVMPPPSPS). Pro residues predominate over residues 114–137 (MPPPSSSPPSSVMPPPVMPPPSPS). Position 115 is a 4-hydroxyproline; partial (proline 115). 4-hydroxyproline is present on residues proline 116, proline 117, proline 121, and proline 122. Proline 127 is subject to 4-hydroxyproline; partial. 4-hydroxyproline is present on residues proline 128, proline 129, proline 133, proline 134, and proline 136.

The polypeptide is Cucumber peeling cupredoxin (Cucumis sativus (Cucumber)).